We begin with the raw amino-acid sequence, 669 residues long: UvrABC system protein B (669 aa).

Residues 26–183 (TNFHAGIAKQ…RHLTELQYTR (158 aa)) enclose the Helicase ATP-binding domain. ATP is bound at residue 39-46 (GVTGSGKT). Residues 92-115 (YYDYYQPEAYVPASDTFIEKDSSI) carry the Beta-hairpin motif. The Helicase C-terminal domain occupies 431–597 (QVDDLISQIN…SVVRPISDIL (167 aa)). One can recognise a UVR domain in the interval 631–666 (AAQMKMLEQQMYQHARDLEFEDAARIRDQIQRLREA).

The protein belongs to the UvrB family. Forms a heterotetramer with UvrA during the search for lesions. Interacts with UvrC in an incision complex.

The protein resides in the cytoplasm. Functionally, the UvrABC repair system catalyzes the recognition and processing of DNA lesions. A damage recognition complex composed of 2 UvrA and 2 UvrB subunits scans DNA for abnormalities. Upon binding of the UvrA(2)B(2) complex to a putative damaged site, the DNA wraps around one UvrB monomer. DNA wrap is dependent on ATP binding by UvrB and probably causes local melting of the DNA helix, facilitating insertion of UvrB beta-hairpin between the DNA strands. Then UvrB probes one DNA strand for the presence of a lesion. If a lesion is found the UvrA subunits dissociate and the UvrB-DNA preincision complex is formed. This complex is subsequently bound by UvrC and the second UvrB is released. If no lesion is found, the DNA wraps around the other UvrB subunit that will check the other stand for damage. This Xylella fastidiosa (strain M12) protein is UvrABC system protein B.